A 249-amino-acid polypeptide reads, in one-letter code: tRNA pseudouridine synthase A (249 aa).

The active-site Nucleophile is D53. A substrate-binding site is contributed by Y111.

It belongs to the tRNA pseudouridine synthase TruA family. Homodimer.

It carries out the reaction uridine(38/39/40) in tRNA = pseudouridine(38/39/40) in tRNA. Its function is as follows. Formation of pseudouridine at positions 38, 39 and 40 in the anticodon stem and loop of transfer RNAs. The sequence is that of tRNA pseudouridine synthase A from Streptococcus pyogenes serotype M1.